Consider the following 342-residue polypeptide: Probable dual-specificity RNA methyltransferase RlmN (342 aa).

The Proton acceptor role is filled by Glu91. The Radical SAM core domain occupies 97 to 327 (YRYGNTVCLS…VTVRRELGDE (231 aa)). A disulfide bridge connects residues Cys104 and Cys332. 3 residues coordinate [4Fe-4S] cluster: Cys111, Cys115, and Cys118. S-adenosyl-L-methionine is bound by residues 158–159 (GE), Ser190, 213–215 (SLH), and Asn289. Catalysis depends on Cys332, which acts as the S-methylcysteine intermediate.

This sequence belongs to the radical SAM superfamily. RlmN family. The cofactor is [4Fe-4S] cluster.

It localises to the cytoplasm. The enzyme catalyses adenosine(2503) in 23S rRNA + 2 reduced [2Fe-2S]-[ferredoxin] + 2 S-adenosyl-L-methionine = 2-methyladenosine(2503) in 23S rRNA + 5'-deoxyadenosine + L-methionine + 2 oxidized [2Fe-2S]-[ferredoxin] + S-adenosyl-L-homocysteine. The catalysed reaction is adenosine(37) in tRNA + 2 reduced [2Fe-2S]-[ferredoxin] + 2 S-adenosyl-L-methionine = 2-methyladenosine(37) in tRNA + 5'-deoxyadenosine + L-methionine + 2 oxidized [2Fe-2S]-[ferredoxin] + S-adenosyl-L-homocysteine. Its function is as follows. Specifically methylates position 2 of adenine 2503 in 23S rRNA and position 2 of adenine 37 in tRNAs. The protein is Probable dual-specificity RNA methyltransferase RlmN of Carboxydothermus hydrogenoformans (strain ATCC BAA-161 / DSM 6008 / Z-2901).